The chain runs to 449 residues: Probable phosphoglucosamine mutase (449 aa).

The Phosphoserine intermediate role is filled by S96. Mg(2+)-binding residues include S96, D233, D235, and D237. At S96 the chain carries Phosphoserine.

This sequence belongs to the phosphohexose mutase family. Requires Mg(2+) as cofactor. Activated by phosphorylation.

The catalysed reaction is alpha-D-glucosamine 1-phosphate = D-glucosamine 6-phosphate. Catalyzes the conversion of glucosamine-6-phosphate to glucosamine-1-phosphate. This Thermococcus gammatolerans (strain DSM 15229 / JCM 11827 / EJ3) protein is Probable phosphoglucosamine mutase.